A 600-amino-acid chain; its full sequence is NADH-quinone oxidoreductase subunit C/D (600 aa).

The interval 1-190 is NADH dehydrogenase I subunit C; it reads MVNNMTDLTA…SPFELTKAKQ (190 aa). The tract at residues 214-600 is NADH dehydrogenase I subunit D; it reads DFMFLNLGPN…IDFVMSDVDR (387 aa).

The protein in the N-terminal section; belongs to the complex I 30 kDa subunit family. In the C-terminal section; belongs to the complex I 49 kDa subunit family. As to quaternary structure, NDH-1 is composed of 13 different subunits. Subunits NuoB, CD, E, F, and G constitute the peripheral sector of the complex.

The protein localises to the cell inner membrane. It catalyses the reaction a quinone + NADH + 5 H(+)(in) = a quinol + NAD(+) + 4 H(+)(out). Its function is as follows. NDH-1 shuttles electrons from NADH, via FMN and iron-sulfur (Fe-S) centers, to quinones in the respiratory chain. The immediate electron acceptor for the enzyme in this species is believed to be ubiquinone. Couples the redox reaction to proton translocation (for every two electrons transferred, four hydrogen ions are translocated across the cytoplasmic membrane), and thus conserves the redox energy in a proton gradient. This is NADH-quinone oxidoreductase subunit C/D from Escherichia coli O6:H1 (strain CFT073 / ATCC 700928 / UPEC).